A 156-amino-acid chain; its full sequence is Small ribosomal subunit protein uS7 (156 aa).

This sequence belongs to the universal ribosomal protein uS7 family. In terms of assembly, part of the 30S ribosomal subunit. Contacts proteins S9 and S11.

Functionally, one of the primary rRNA binding proteins, it binds directly to 16S rRNA where it nucleates assembly of the head domain of the 30S subunit. Is located at the subunit interface close to the decoding center, probably blocks exit of the E-site tRNA. In Geobacillus kaustophilus (strain HTA426), this protein is Small ribosomal subunit protein uS7.